Consider the following 272-residue polypeptide: Regulatory protein RecX (272 aa).

This sequence belongs to the RecX family.

Its subcellular location is the cytoplasm. In terms of biological role, modulates RecA activity. This Staphylococcus aureus (strain Newman) protein is Regulatory protein RecX.